An 88-amino-acid polypeptide reads, in one-letter code: Apolipoprotein C-I (88 aa).

Positions Met-1–Ala-26 are cleaved as a signal peptide.

The protein belongs to the apolipoprotein C1 family.

Its subcellular location is the secreted. In terms of biological role, inhibitor of lipoprotein binding to the low density lipoprotein (LDL) receptor, LDL receptor-related protein, and very low density lipoprotein (VLDL) receptor. Associates with high density lipoproteins (HDL) and the triacylglycerol-rich lipoproteins in the plasma and makes up about 10% of the protein of the VLDL and 2% of that of HDL. Appears to interfere directly with fatty acid uptake and is also the major plasma inhibitor of cholesteryl ester transfer protein (CETP). Binds free fatty acids and reduces their intracellular esterification. Modulates the interaction of APOE with beta-migrating VLDL and inhibits binding of beta-VLDL to the LDL receptor-related protein. The chain is Apolipoprotein C-I (APOC1) from Ursus maritimus (Polar bear).